A 242-amino-acid chain; its full sequence is GDSL esterase/lipase At5g62930 (242 aa).

The active-site Nucleophile is the serine 11. Residues 223–242 form a disordered region; sequence PHHSHIDGKNPSKAFEERCL.

It belongs to the 'GDSL' lipolytic enzyme family.

This chain is GDSL esterase/lipase At5g62930, found in Arabidopsis thaliana (Mouse-ear cress).